A 104-amino-acid chain; its full sequence is Large ribosomal subunit protein bL21 (104 aa).

It belongs to the bacterial ribosomal protein bL21 family. Part of the 50S ribosomal subunit. Contacts protein L20.

Its function is as follows. This protein binds to 23S rRNA in the presence of protein L20. This Salinispora tropica (strain ATCC BAA-916 / DSM 44818 / JCM 13857 / NBRC 105044 / CNB-440) protein is Large ribosomal subunit protein bL21.